Reading from the N-terminus, the 171-residue chain is Translationally-controlled tumor protein homolog (171 aa).

In terms of domain architecture, TCTP spans 1–171; it reads MKIWKDVFTG…FKHGLEEEKF (171 aa).

Belongs to the TCTP family.

It is found in the cytoplasm. In terms of biological role, involved in calcium binding and microtubule stabilization. This Anopheles gambiae (African malaria mosquito) protein is Translationally-controlled tumor protein homolog.